The chain runs to 364 residues: Aminomethyltransferase (364 aa).

Belongs to the GcvT family. As to quaternary structure, the glycine cleavage system is composed of four proteins: P, T, L and H.

The enzyme catalyses N(6)-[(R)-S(8)-aminomethyldihydrolipoyl]-L-lysyl-[protein] + (6S)-5,6,7,8-tetrahydrofolate = N(6)-[(R)-dihydrolipoyl]-L-lysyl-[protein] + (6R)-5,10-methylene-5,6,7,8-tetrahydrofolate + NH4(+). The glycine cleavage system catalyzes the degradation of glycine. This is Aminomethyltransferase from Thermotoga petrophila (strain ATCC BAA-488 / DSM 13995 / JCM 10881 / RKU-1).